The chain runs to 288 residues: Protein shisa-2 (288 aa).

The signal sequence occupies residues 1–23; that stretch reads MWLEGSPLAVLAAVSFLLSVLAA. Residues 24–110 lie on the Extracellular side of the membrane; that stretch reads AQGSGEYCHG…DSTAVPIYVP (87 aa). Residues 111-131 form a helical membrane-spanning segment; it reads FLIVGSVFVAFIIVGSLVAIC. The Cytoplasmic portion of the chain corresponds to 132-288; that stretch reads CCRCLRPKQE…EQMMYPAVTV (157 aa). The span at 161-188 shows a compositional bias: low complexity; the sequence is SSASTSRGSSSRQSSTAASSSSSANSGA. The disordered stretch occupies residues 161–198; sequence SSASTSRGSSSRQSSTAASSSSSANSGARPPPTRSQTN.

Belongs to the shisa family. As to quaternary structure, interacts with fzd8 and fgfr1.

It is found in the endoplasmic reticulum membrane. Its function is as follows. Plays an essential role in the maturation of presomitic mesoderm cells by individual attenuation of both fgf and wnt signaling. Inhibits both wnt and fgf signaling through the regulation of protein maturation and cell surface transportation of their receptors within the endoplasmic reticulum. The protein is Protein shisa-2 (shisa2) of Xenopus laevis (African clawed frog).